Here is a 611-residue protein sequence, read N- to C-terminus: Glutamine--fructose-6-phosphate aminotransferase [isomerizing] (611 aa).

C2 functions as the Nucleophile; for GATase activity in the catalytic mechanism. Positions 2-219 (CGIVGAIAER…EGDIAEIRRD (218 aa)) constitute a Glutamine amidotransferase type-2 domain. 2 SIS domains span residues 287-427 (AAEL…VQKR) and 460-601 (VSEL…VDQP). K606 (for Fru-6P isomerization activity) is an active-site residue.

Homodimer.

It localises to the cytoplasm. It catalyses the reaction D-fructose 6-phosphate + L-glutamine = D-glucosamine 6-phosphate + L-glutamate. Its function is as follows. Catalyzes the first step in hexosamine metabolism, converting fructose-6P into glucosamine-6P using glutamine as a nitrogen source. The protein is Glutamine--fructose-6-phosphate aminotransferase [isomerizing] of Pseudomonas aeruginosa (strain ATCC 15692 / DSM 22644 / CIP 104116 / JCM 14847 / LMG 12228 / 1C / PRS 101 / PAO1).